Reading from the N-terminus, the 405-residue chain is Elongation factor Tu (405 aa).

The tr-type G domain maps to 10-213 (KEHVNVGTIG…AMDEYIPTPQ (204 aa)). The tract at residues 19-26 (GHVDHGKS) is G1. Position 19–26 (19–26 (GHVDHGKS)) interacts with GTP. A Mg(2+)-binding site is contributed by S26. The G2 stretch occupies residues 64 to 68 (GITIN). A G3 region spans residues 85 to 88 (DCPG). GTP contacts are provided by residues 85–89 (DCPGH) and 140–143 (NKCD). The G4 stretch occupies residues 140 to 143 (NKCD). The segment at 178–180 (SAL) is G5.

It belongs to the TRAFAC class translation factor GTPase superfamily. Classic translation factor GTPase family. EF-Tu/EF-1A subfamily. As to quaternary structure, monomer.

It is found in the cytoplasm. The catalysed reaction is GTP + H2O = GDP + phosphate + H(+). In terms of biological role, GTP hydrolase that promotes the GTP-dependent binding of aminoacyl-tRNA to the A-site of ribosomes during protein biosynthesis. The chain is Elongation factor Tu from Aquifex aeolicus (strain VF5).